Here is a 191-residue protein sequence, read N- to C-terminus: GDP-mannose pyrophosphatase (191 aa).

Residues tyrosine 17, 38-40 (KRE), arginine 67, and 85-87 (AGL) contribute to the GDP-alpha-D-mannose site. Residues 43–180 (DRGNGATILL…EIRDGKTVLL (138 aa)) enclose the Nudix hydrolase domain. 3 residues coordinate Mg(2+): alanine 85, glutamate 100, and glutamate 104. The Nudix box signature appears at 86–106 (GLLDNDEPEACIRKEAIEETG). GDP-alpha-D-mannose contacts are provided by residues glutamate 104, glutamate 127, 150–151 (DE), and lysine 176. Residue glutamate 151 coordinates Mg(2+).

This sequence belongs to the Nudix hydrolase family. NudK subfamily. As to quaternary structure, homodimer. Mg(2+) is required as a cofactor.

It carries out the reaction GDP-alpha-D-mannose + H2O = alpha-D-mannose 1-phosphate + GMP + 2 H(+). Functionally, nucleoside diphosphate sugar hydrolase that hydrolyzes GDP-mannose as its preferred substrate, yielding GMP and mannose-1-phosphate. The polypeptide is GDP-mannose pyrophosphatase (nudK) (Citrobacter koseri (strain ATCC BAA-895 / CDC 4225-83 / SGSC4696)).